The following is a 52-amino-acid chain: AANRHLCGSHLVEALYLVCGNRGFFYIPSKMGIVEQCCDTPCSLYDPENYCN.

Intrachain disulfides connect Cys7/Cys38, Cys19/Cys51, and Cys37/Cys42.

The protein belongs to the insulin family. Heterodimer of a B chain and an A chain linked by two disulfide bonds.

It is found in the secreted. Insulin decreases blood glucose concentration. It increases cell permeability to monosaccharides, amino acids and fatty acids. It accelerates glycolysis, the pentose phosphate cycle, and glycogen synthesis in liver. This Polypterus senegalus (Senegal bichir) protein is Insulin (ins).